A 338-amino-acid polypeptide reads, in one-letter code: Arginase, mitochondrial (338 aa).

The N-terminal 15 residues, 1 to 15 (MSTIARRGFHYMQRL), are a transit peptide targeting the mitochondrion. L-ornithine-binding positions include S73 and 92 to 95 (DSTN). 4 residues coordinate Mn(2+): H157, D181, H183, and D185. L-ornithine is bound at residue 185–187 (DLY). 191–193 (EGN) is a binding site for substrate. Position 220 (S220) interacts with L-ornithine. Residues D266 and D268 each coordinate Mn(2+). Residue E309 coordinates substrate.

This sequence belongs to the arginase family. As to quaternary structure, forms homohexamers. Mn(2+) serves as cofactor.

It localises to the mitochondrion. The enzyme catalyses L-arginine + H2O = urea + L-ornithine. The catalysed reaction is agmatine + H2O = urea + putrescine. It participates in nitrogen metabolism; urea cycle; L-ornithine and urea from L-arginine: step 1/1. Its pathway is amine and polyamine biosynthesis; putrescine biosynthesis via agmatine pathway; putrescine from agmatine: step 1/1. In terms of biological role, catalyzes the hydrolysis of L-arginine to urea and L-ornithine. The latter can be utilized in the urea cycle or as a precursor for the synthesis of both polyamines and proline. Possesses agmatinase activity. Catalyzes the formation of putrescine from agmatine. The protein is Arginase, mitochondrial of Medicago truncatula (Barrel medic).